The primary structure comprises 53 residues: IgA-inducing protein homolog (53 aa).

The first 30 residues, 1–30 (MCSYYHMKKRSVSGCNITIFAVMFSHLSAG), serve as a signal peptide directing secretion.

It localises to the secreted. Enhances IgA secretion from B-cells stimulated via CD40. The chain is IgA-inducing protein homolog (IGIP) from Homo sapiens (Human).